The chain runs to 573 residues: uncharacterized protein (573 aa).

Disordered regions lie at residues 1–33 (MLQQ…SIPR) and 60–101 (LVAN…SRYD). Positions 60-70 (LVANRSDNNGN) are enriched in polar residues. An N-linked (GlcNAc...) asparagine glycan is attached at Asn-63. The segment covering 84–95 (SSSTSSLPSTRN) has biased composition (low complexity). 10 repeat units span residues 102–103 (NM), 104–105 (NM), 106–107 (NM), 108–109 (NM), 110–111 (NM), 112–113 (NM), 114–115 (NM), 116–117 (NM), 118–119 (NM), and 120–121 (NM). A 10 X 2 AA tandem repeats of N-M region spans residues 102–121 (NMNMNMNMNMNMNMNMNMNM). Residue Asn-123 is glycosylated (N-linked (GlcNAc...) asparagine). 4 disordered regions span residues 150–174 (IPEK…PRVR), 192–271 (QFPN…IRSN), 286–317 (KSSN…PITS), and 357–379 (NNRI…DKRT). The segment covering 157-170 (SRYSLRSSPPTYSN) has biased composition (polar residues). Positions 208–225 (LPPSSTFPDSPSSSSLPL) are enriched in low complexity. The span at 226-252 (TQTGGPSSADNDSIATGTNNRSPQQTK) shows a compositional bias: polar residues. Asn-236 carries N-linked (GlcNAc...) asparagine glycosylation. N-linked (GlcNAc...) asparagine glycosylation is found at Asn-437 and Asn-442. Low complexity-rich tracts occupy residues 441-457 (INSS…SSSS) and 466-483 (SISS…SKSK). A disordered region spans residues 441 to 483 (INSSISSPAPSSSSSSSLVSRGPMQSISSSPTPAPSSGSSKSK). N-linked (GlcNAc...) asparagine glycosylation is found at Asn-498, Asn-535, and Asn-541.

This sequence to yeast AFR1. In terms of processing, N-glycosylated.

This is an uncharacterized protein from Saccharomyces cerevisiae (strain ATCC 204508 / S288c) (Baker's yeast).